Reading from the N-terminus, the 351-residue chain is Thiamine-phosphate synthase (351 aa).

The unknown stretch occupies residues 1–128 (MKNPNIIQPE…SKIASEIRYE (128 aa)). The segment at 129-351 (IYTLEIEILN…IIIKELSHEN (223 aa)) is thiamine-phosphate synthase. 4-amino-2-methyl-5-(diphosphooxymethyl)pyrimidine-binding positions include 180-184 (QHRFK) and Asn212. 2 residues coordinate Mg(2+): Asn213 and Asp232. 4-amino-2-methyl-5-(diphosphooxymethyl)pyrimidine is bound at residue Ser251. 2-[(2R,5Z)-2-carboxy-4-methylthiazol-5(2H)-ylidene]ethyl phosphate is bound at residue 277–279 (TLT). Lys280 provides a ligand contact to 4-amino-2-methyl-5-(diphosphooxymethyl)pyrimidine. 2-[(2R,5Z)-2-carboxy-4-methylthiazol-5(2H)-ylidene]ethyl phosphate-binding positions include Gly307 and 327-328 (VS).

Belongs to the thiamine-phosphate synthase family.

It catalyses the reaction 2-[(2R,5Z)-2-carboxy-4-methylthiazol-5(2H)-ylidene]ethyl phosphate + 4-amino-2-methyl-5-(diphosphooxymethyl)pyrimidine + 2 H(+) = thiamine phosphate + CO2 + diphosphate. It carries out the reaction 2-(2-carboxy-4-methylthiazol-5-yl)ethyl phosphate + 4-amino-2-methyl-5-(diphosphooxymethyl)pyrimidine + 2 H(+) = thiamine phosphate + CO2 + diphosphate. The catalysed reaction is 4-methyl-5-(2-phosphooxyethyl)-thiazole + 4-amino-2-methyl-5-(diphosphooxymethyl)pyrimidine + H(+) = thiamine phosphate + diphosphate. The protein operates within cofactor biosynthesis; thiamine diphosphate biosynthesis; thiamine phosphate from 4-amino-2-methyl-5-diphosphomethylpyrimidine and 4-methyl-5-(2-phosphoethyl)-thiazole: step 1/1. In terms of biological role, condenses 4-methyl-5-(beta-hydroxyethyl)thiazole monophosphate (THZ-P) and 2-methyl-4-amino-5-hydroxymethyl pyrimidine pyrophosphate (HMP-PP) to form thiamine monophosphate (TMP). The sequence is that of Thiamine-phosphate synthase from Prochlorococcus marinus subsp. pastoris (strain CCMP1986 / NIES-2087 / MED4).